We begin with the raw amino-acid sequence, 374 residues long: 5-hydroxytryptamine receptor 1D (374 aa).

3 N-linked (GlcNAc...) asparagine glycosylation sites follow: N5, N17, and N21. 3 helical membrane passes run 36–61 (ISLV…TTIL), 73–94 (LIGS…ISIA), and 107–131 (LCDI…VIAL). A disulfide bond links C108 and C185. Positions 115 and 119 each coordinate serotonin. The DRY motif; important for ligand-induced conformation changes signature appears at 132–134 (DRY). The next 4 helical transmembrane spans lie at 152–173 (AAAM…PLFW), 192–215 (ISYT…ILYG), 298–323 (KTLG…VLPI), and 333–356 (ALFD…YTVF). Residue S318 coordinates serotonin. The NPxxY motif; important for ligand-induced conformation changes and signaling signature appears at 349–353 (NPVIY).

It belongs to the G-protein coupled receptor 1 family. In terms of assembly, homodimer. Heterodimer with HTR1B. As to expression, detected in dorsal raphe.

The protein resides in the cell membrane. G-protein coupled receptor for 5-hydroxytryptamine (serotonin). Also functions as a receptor for ergot alkaloid derivatives, various anxiolytic and antidepressant drugs and other psychoactive substances. Ligand binding causes a conformation change that triggers signaling via guanine nucleotide-binding proteins (G proteins) and modulates the activity of downstream effectors, such as adenylate cyclase. HTR1D is coupled to G(i)/G(o) G alpha proteins and mediates inhibitory neurotransmission by inhibiting adenylate cyclase activity. Regulates the release of 5-hydroxytryptamine in the brain, and thereby affects neural activity. May also play a role in regulating the release of other neurotransmitters. May play a role in vasoconstriction. This chain is 5-hydroxytryptamine receptor 1D (Htr1d), found in Rattus norvegicus (Rat).